Reading from the N-terminus, the 104-residue chain is Large ribosomal subunit protein uL24 (104 aa).

Belongs to the universal ribosomal protein uL24 family. In terms of assembly, part of the 50S ribosomal subunit.

Functionally, one of two assembly initiator proteins, it binds directly to the 5'-end of the 23S rRNA, where it nucleates assembly of the 50S subunit. Its function is as follows. One of the proteins that surrounds the polypeptide exit tunnel on the outside of the subunit. The sequence is that of Large ribosomal subunit protein uL24 from Bradyrhizobium sp. (strain BTAi1 / ATCC BAA-1182).